The following is a 212-amino-acid chain: MKNVKIALTKGRLEKKAIEIFKTININTRELEDKGRKLIFNCENEEYNIELFLVKAKDVETYVEYGAADIGIVGKDTLMETNKEFYEVLDLNVGKCKFALAALPSFKLDQGYNMKKIATKYPNIAREYFRKKGMDVELIKIEGSVELGPIVGLADAIVDIVETGNTLRENGLVVVEDICEISARMIVNKASMKTKKDEIIKIIENVSEVIRQ.

It belongs to the ATP phosphoribosyltransferase family. Short subfamily. In terms of assembly, heteromultimer composed of HisG and HisZ subunits.

Its subcellular location is the cytoplasm. The enzyme catalyses 1-(5-phospho-beta-D-ribosyl)-ATP + diphosphate = 5-phospho-alpha-D-ribose 1-diphosphate + ATP. The protein operates within amino-acid biosynthesis; L-histidine biosynthesis; L-histidine from 5-phospho-alpha-D-ribose 1-diphosphate: step 1/9. In terms of biological role, catalyzes the condensation of ATP and 5-phosphoribose 1-diphosphate to form N'-(5'-phosphoribosyl)-ATP (PR-ATP). Has a crucial role in the pathway because the rate of histidine biosynthesis seems to be controlled primarily by regulation of HisG enzymatic activity. This chain is ATP phosphoribosyltransferase, found in Clostridium botulinum (strain Okra / Type B1).